The sequence spans 518 residues: Arp2/3 complex-activating protein rickA (518 aa).

Residues 310–518 are disordered; sequence SAAQLQSAET…ERNAKQSQQR (209 aa). Pro residues-rich tracts occupy residues 344 to 354 and 382 to 401; these read TPPPAPPPPMP and VPPP…PPPV. Positions 418–430 are enriched in polar residues; sequence QPRPAVDTTNLMK. In terms of domain architecture, WH2 spans 424-441; it reads DTTNLMKQIQGGFNLKKI. The span at 439 to 461 shows a compositional bias: basic and acidic residues; sequence KKIEYGEDGKPIPKNKEDTKETS. Polar residues predominate over residues 488 to 498; that stretch reads GTDSGWASDVS.

Homodimer.

It localises to the cell surface. Its function is as follows. Recruits and activates the Arp2/3 complex, which in turn leads to actin polymerization, promoting Rickettsia motility during infection. The sequence is that of Arp2/3 complex-activating protein rickA (rickA) from Rickettsia bellii (strain RML369-C).